Here is a 79-residue protein sequence, read N- to C-terminus: Probable [Fe-S]-dependent transcriptional repressor (79 aa).

Residues Cys-56, Cys-61, Cys-64, and Cys-70 each contribute to the iron-sulfur cluster site.

The protein belongs to the FeoC family.

In terms of biological role, may function as a transcriptional regulator that controls feoABC expression. The sequence is that of Probable [Fe-S]-dependent transcriptional repressor from Serratia proteamaculans (strain 568).